Reading from the N-terminus, the 617-residue chain is Syncytin-A (617 aa).

Positions M1 to A17 are cleaved as a signal peptide. Residues Y18–W544 are Extracellular-facing. N-linked (GlcNAc...) asparagine glycosylation is present at N27. The short motif at C44–C47 is the CXXC element. 3 disulfide bridges follow: C44–C47, C44–C505, and C497–C504. N272 and N365 each carry an N-linked (GlcNAc...) asparagine glycan. Residues L420–I440 form a fusion peptide region. Residues C497–C505 carry the CX6CC motif. Residues L545–F565 form a helical membrane-spanning segment. Topologically, residues R566 to V617 are cytoplasmic.

Belongs to the gamma type-C retroviral envelope protein family. The mature protein consists of a trimer of SU-TM heterodimers. The SU-TM heterodimers are attached by a labile interchain disulfide bond. Post-translationally, synthesized as an inactive precursor that is heavily N-glycosylated and processed likely by furin in the Golgi to yield the mature SU and TM proteins. The cleavage site between SU and TM requires the minimal sequence [KR]-X-[KR]-R. The CXXC motif is highly conserved across a broad range of retroviral envelope proteins. It is thought to participate in the formation of a labile disulfide bond possibly with the CX6CC motif present in the transmembrane protein. Isomerization of the intersubunit disulfide bond to an SU intrachain disulfide bond is thought to occur upon receptor recognition in order to allow membrane fusion. In terms of tissue distribution, highly expressed in placenta where it localizes to syncytiotrophoblasts of the labyrinthine zona. Specifically localizes to syncytiotrophoblast layer I (SynT-I). Also detected at very low levels in hippocampus, brain, testis and ovary.

The protein localises to the cell membrane. Its function is as follows. This endogenous retroviral envelope protein has retained its original fusogenic properties. Together with Synb, participates in trophoblast fusion and the formation of a syncytium during placenta morphogenesis. Syna is essential for placental development and is specifically required for formation of syncytiotrophoblast layer I (SynT-I). Promotes muscle myoblast fusion. Does not have immunosuppressive activity. This chain is Syncytin-A, found in Mus musculus (Mouse).